We begin with the raw amino-acid sequence, 327 residues long: Probable cell division protein WhiA (327 aa).

The H-T-H motif DNA-binding region spans 275–308; that stretch reads SLEELGRLADPPMTKDAVAGRIRRLLSMADRKAK. The segment at 304-327 is disordered; the sequence is DRKAKQDGIPDTESAVTPDLLEDA.

Belongs to the WhiA family.

Involved in cell division and chromosome segregation. The chain is Probable cell division protein WhiA from Mycolicibacterium gilvum (strain PYR-GCK) (Mycobacterium gilvum (strain PYR-GCK)).